We begin with the raw amino-acid sequence, 274 residues long: Hydroxyacylglutathione hydrolase, cytoplasmic isozyme (274 aa).

H59, H61, D63, H64, H121, and D144 together coordinate Zn(2+). Substrate is bound by residues R153 and 188 to 190; that span reads HEY. Position 188 (H188) interacts with Zn(2+). S257 bears the Phosphoserine mark. Substrate is bound at residue 268–271; that stretch reads RAMK.

This sequence belongs to the metallo-beta-lactamase superfamily. Glyoxalase II family. Zn(2+) serves as cofactor.

The protein localises to the cytoplasm. It catalyses the reaction an S-(2-hydroxyacyl)glutathione + H2O = a 2-hydroxy carboxylate + glutathione + H(+). It carries out the reaction (R)-S-lactoylglutathione + H2O = (R)-lactate + glutathione + H(+). The protein operates within secondary metabolite metabolism; methylglyoxal degradation; (R)-lactate from methylglyoxal: step 2/2. Its activity is regulated as follows. Inhibited by various thiol compounds such as glutathione and coenzyme A. In terms of biological role, thiolesterase that catalyzes the hydrolysis of S-D-lactoylglutathione to form glutathione and D-lactic acid. Involved in the metabolism of methylglyoxal, a toxic compound for yeast proliferation, by converting methylglyoxal to lactate via S-D-lactoylglutathione by sequential enzyme reactions catalyzed by glyoxalase I and glyoxalase II. This is Hydroxyacylglutathione hydrolase, cytoplasmic isozyme from Saccharomyces cerevisiae (strain ATCC 204508 / S288c) (Baker's yeast).